Consider the following 129-residue polypeptide: Fluoride-specific ion channel FluC 2 (129 aa).

4 helical membrane-spanning segments follow: residues 3–23 (FLYV…MNLW), 32–52 (ATLA…RFLA), 59–79 (LVLL…FSAF), and 90–110 (GAWL…LIMV). Na(+) is bound by residues glycine 71 and threonine 74.

Belongs to the fluoride channel Fluc/FEX (TC 1.A.43) family.

Its subcellular location is the cell membrane. The catalysed reaction is fluoride(in) = fluoride(out). With respect to regulation, na(+) is not transported, but it plays an essential structural role and its presence is essential for fluoride channel function. Fluoride-specific ion channel. Important for reducing fluoride concentration in the cell, thus reducing its toxicity. The chain is Fluoride-specific ion channel FluC 2 from Listeria monocytogenes serovar 1/2a (strain ATCC BAA-679 / EGD-e).